The sequence spans 363 residues: Type-2 angiotensin II receptor (363 aa).

The Extracellular segment spans residues Met1–Glu45. Residues Asn4, Asn13, Asn24, Asn29, and Asn34 are each glycosylated (N-linked (GlcNAc...) asparagine). Intrachain disulfides connect Cys35-Cys290 and Cys117-Cys195. The chain crosses the membrane as a helical span at residues Ala46–Cys70. Residues Cys71–Ser80 lie on the Cytoplasmic side of the membrane. Residues Ile81–Tyr104 traverse the membrane as a helical segment. Tyr103 and Tyr104 together coordinate angiotensin II. Residues Ser105 to Pro114 lie on the Extracellular side of the membrane. The chain crosses the membrane as a helical span at residues Val115–Val140. Residues Asp141 to Gln159 are Cytoplasmic-facing. A helical membrane pass occupies residues Ala160–Phe181. Angiotensin II is bound by residues Arg182, Tyr204, and Lys215. Residues Arg182–Gln206 lie on the Extracellular side of the membrane. Residues Trp207 to Phe232 traverse the membrane as a helical segment. The Cytoplasmic segment spans residues Gly233 to Met257. A helical membrane pass occupies residues Ala258–Leu281. Asp279 is a binding site for angiotensin II. Residues Thr282–Ala294 are Extracellular-facing. The helical transmembrane segment at Val295–Phe320 threads the bilayer. Asp297 is an angiotensin II binding site. At Val321–Ser363 the chain is on the cytoplasmic side. The tract at residues Arg324–Phe333 is helix VIII. Ser354 carries the post-translational modification Phosphoserine; by PKC.

Belongs to the G-protein coupled receptor 1 family. As to quaternary structure, interacts with MTUS1. Abundant expression in fetal tissues, immature brain, skin wound and atretic ovarian follicles.

Its subcellular location is the cell membrane. Receptor for angiotensin II, a vasoconstricting peptide. Signals primarily via a non-canonical G-protein- and beta-arrestin independent pathways. Cooperates with MTUS1 to inhibit ERK2 activation and cell proliferation. The chain is Type-2 angiotensin II receptor from Rattus norvegicus (Rat).